The sequence spans 332 residues: Ferredoxin--NADP reductase 2 (332 aa).

The FAD site is built by Asp-33, Gln-41, Tyr-46, Val-86, Ile-121, Asp-282, and Ser-325.

It belongs to the ferredoxin--NADP reductase type 2 family. In terms of assembly, homodimer. Requires FAD as cofactor.

It catalyses the reaction 2 reduced [2Fe-2S]-[ferredoxin] + NADP(+) + H(+) = 2 oxidized [2Fe-2S]-[ferredoxin] + NADPH. In Sulfolobus acidocaldarius (strain ATCC 33909 / DSM 639 / JCM 8929 / NBRC 15157 / NCIMB 11770), this protein is Ferredoxin--NADP reductase 2.